We begin with the raw amino-acid sequence, 351 residues long: DNA polymerase IV (351 aa).

The UmuC domain maps to Ile-4 to Gly-185. Mg(2+)-binding residues include Asp-8 and Asp-103. The active site involves Glu-104.

The protein belongs to the DNA polymerase type-Y family. In terms of assembly, monomer. It depends on Mg(2+) as a cofactor.

It localises to the cytoplasm. It carries out the reaction DNA(n) + a 2'-deoxyribonucleoside 5'-triphosphate = DNA(n+1) + diphosphate. Its function is as follows. Poorly processive, error-prone DNA polymerase involved in untargeted mutagenesis. Copies undamaged DNA at stalled replication forks, which arise in vivo from mismatched or misaligned primer ends. These misaligned primers can be extended by PolIV. Exhibits no 3'-5' exonuclease (proofreading) activity. May be involved in translesional synthesis, in conjunction with the beta clamp from PolIII. This Escherichia coli O139:H28 (strain E24377A / ETEC) protein is DNA polymerase IV.